Consider the following 351-residue polypeptide: Glycerol-3-phosphate dehydrogenase 1-like protein (351 aa).

12 to 17 (GSGNWG) provides a ligand contact to NAD(+). Lysine 122 provides a ligand contact to substrate. Position 155 (alanine 155) interacts with NAD(+). Lysine 206 functions as the Proton acceptor in the catalytic mechanism. Residues arginine 271, lysine 298, and glutamine 300 each contribute to the NAD(+) site. 271–272 (RN) is a substrate binding site.

This sequence belongs to the NAD-dependent glycerol-3-phosphate dehydrogenase family. As to quaternary structure, interacts with SCN5A.

It is found in the cytoplasm. It catalyses the reaction sn-glycerol 3-phosphate + NAD(+) = dihydroxyacetone phosphate + NADH + H(+). Plays a role in regulating cardiac sodium current; decreased enzymatic activity with resulting increased levels of glycerol 3-phosphate activating the DPD1L-dependent SCN5A phosphorylation pathway, may ultimately lead to decreased sodium current; cardiac sodium current may also be reduced due to alterations of NAD(H) balance induced by DPD1L. The protein is Glycerol-3-phosphate dehydrogenase 1-like protein (GPD1L) of Pongo abelii (Sumatran orangutan).